Consider the following 293-residue polypeptide: Proximal tail tube connector protein (293 aa).

Disordered regions lie at residues 106–166 (VGVK…FKRD) and 192–240 (QIEE…NDKL). Basic and acidic residues predominate over residues 112–126 (TKNDTDRNDNRDVKQ). A compositionally biased stretch (polar residues) spans 127–160 (DLTSNGTSSTDAKQNDTSKTTGNEKSSGSGSITD). The segment covering 193–205 (IEEHNENKKRDTK) has biased composition (basic and acidic residues). Over residues 206 to 231 (TSNTTDTTSNTTGTSTLDSDSKTSNK) the composition is skewed to low complexity.

This sequence belongs to the phi29likevirus proximal tail tube connector protein family.

The protein resides in the virion. In terms of biological role, forms the proximal part of the tail tube. In Bacillus phage PZA (Bacteriophage PZA), this protein is Proximal tail tube connector protein (11).